The following is a 399-amino-acid chain: Arginase (399 aa).

Histidine 193, aspartate 216, histidine 218, and aspartate 220 together coordinate Mn(2+). Residues 218–222, 229–231, and aspartate 273 each bind substrate; these read HADIN and SGN. Residues aspartate 322 and aspartate 324 each coordinate Mn(2+). Threonine 336 and glutamate 367 together coordinate substrate.

The protein belongs to the arginase family. Mn(2+) is required as a cofactor.

It localises to the cytoplasm. It catalyses the reaction L-arginine + H2O = urea + L-ornithine. It functions in the pathway nitrogen metabolism; urea cycle; L-ornithine and urea from L-arginine: step 1/1. The sequence is that of Arginase (CAR1) from Eremothecium gossypii (strain ATCC 10895 / CBS 109.51 / FGSC 9923 / NRRL Y-1056) (Yeast).